A 1091-amino-acid polypeptide reads, in one-letter code: Leucine--tRNA ligase, cytoplasmic (1091 aa).

A 'HIGH' region motif is present at residues 53 to 63; it reads PYMNGYLHIGH. Positions 715–719 match the 'KMSKS' region motif; that stretch reads KMSKS. Residue Lys718 coordinates ATP.

The protein belongs to the class-I aminoacyl-tRNA synthetase family.

It is found in the cytoplasm. The protein localises to the cytosol. The enzyme catalyses tRNA(Leu) + L-leucine + ATP = L-leucyl-tRNA(Leu) + AMP + diphosphate. Catalyzes the specific attachment of an amino acid to its cognate tRNA in a two step reaction: the amino acid (AA) is first activated by ATP to form AA-AMP and then transferred to the acceptor end of the tRNA. This chain is Leucine--tRNA ligase, cytoplasmic, found in Arabidopsis thaliana (Mouse-ear cress).